Consider the following 162-residue polypeptide: Universal stress protein MJ0577 (162 aa).

ATP-binding positions include P11, V41, 127–133 (GSHGKTN), and 141–143 (SVT).

It belongs to the universal stress protein A family. As to quaternary structure, homodimer. The cofactor is Mn(2+).

It localises to the cytoplasm. This Methanocaldococcus jannaschii (strain ATCC 43067 / DSM 2661 / JAL-1 / JCM 10045 / NBRC 100440) (Methanococcus jannaschii) protein is Universal stress protein MJ0577.